The following is a 476-amino-acid chain: Sulfate adenylyltransferase subunit 1 (476 aa).

Residues Lys25–Val241 enclose the tr-type G domain. Positions Gly34–Ser41 are G1. Gly34–Ser41 serves as a coordination point for GTP. A G2 region spans residues Gly92–Asp96. The interval Asp113–Gly116 is G3. GTP is bound by residues Asp113–His117 and Asn168–Asp171. The interval Asn168 to Asp171 is G4. The tract at residues Ser206 to Leu208 is G5.

Belongs to the TRAFAC class translation factor GTPase superfamily. Classic translation factor GTPase family. CysN/NodQ subfamily. In terms of assembly, heterodimer composed of CysD, the smaller subunit, and CysN.

It catalyses the reaction sulfate + ATP + H(+) = adenosine 5'-phosphosulfate + diphosphate. It functions in the pathway sulfur metabolism; hydrogen sulfide biosynthesis; sulfite from sulfate: step 1/3. Its function is as follows. With CysD forms the ATP sulfurylase (ATPS) that catalyzes the adenylation of sulfate producing adenosine 5'-phosphosulfate (APS) and diphosphate, the first enzymatic step in sulfur assimilation pathway. APS synthesis involves the formation of a high-energy phosphoric-sulfuric acid anhydride bond driven by GTP hydrolysis by CysN coupled to ATP hydrolysis by CysD. The protein is Sulfate adenylyltransferase subunit 1 of Erwinia tasmaniensis (strain DSM 17950 / CFBP 7177 / CIP 109463 / NCPPB 4357 / Et1/99).